The sequence spans 328 residues: tRNA dimethylallyltransferase (328 aa).

An ATP-binding site is contributed by 19–26 (GPTASGKT). 21–26 (TASGKT) provides a ligand contact to substrate. Interaction with substrate tRNA stretches follow at residues 50-53 (DSAL), 174-178 (QRIQR), and 257-262 (RCVGYR).

The protein belongs to the IPP transferase family. As to quaternary structure, monomer. Mg(2+) serves as cofactor.

The catalysed reaction is adenosine(37) in tRNA + dimethylallyl diphosphate = N(6)-dimethylallyladenosine(37) in tRNA + diphosphate. In terms of biological role, catalyzes the transfer of a dimethylallyl group onto the adenine at position 37 in tRNAs that read codons beginning with uridine, leading to the formation of N6-(dimethylallyl)adenosine (i(6)A). This Leptothrix cholodnii (strain ATCC 51168 / LMG 8142 / SP-6) (Leptothrix discophora (strain SP-6)) protein is tRNA dimethylallyltransferase.